A 594-amino-acid polypeptide reads, in one-letter code: Probable translation initiation factor IF-2 (594 aa).

The 216-residue stretch at 11-226 (LRTPIVCVMG…LIGLAQRFLE (216 aa)) folds into the tr-type G domain. Positions 20 to 27 (GHVDHGKT) are G1. 20–27 (GHVDHGKT) serves as a coordination point for GTP. The segment at 45-49 (AITQH) is G2. The segment at 81–84 (DTPG) is G3. GTP is bound by residues 81 to 85 (DTPGH) and 135 to 138 (NKID). The G4 stretch occupies residues 135–138 (NKID). Residues 203 to 205 (SAR) form a G5 region.

It belongs to the TRAFAC class translation factor GTPase superfamily. Classic translation factor GTPase family. IF-2 subfamily.

Its function is as follows. Function in general translation initiation by promoting the binding of the formylmethionine-tRNA to ribosomes. Seems to function along with eIF-2. This Methanocella arvoryzae (strain DSM 22066 / NBRC 105507 / MRE50) protein is Probable translation initiation factor IF-2.